The primary structure comprises 332 residues: DNA-directed RNA polymerase subunit alpha (332 aa).

The interval 1–234 is alpha N-terminal domain (alpha-NTD); that stretch reads MTVTVSQVLR…DQLSVFGDFT (234 aa). The alpha C-terminal domain (alpha-CTD) stretch occupies residues 248-332; that stretch reads VDPVLLRPID…PGVSQYGMLG (85 aa).

This sequence belongs to the RNA polymerase alpha chain family. Homodimer. The RNAP catalytic core consists of 2 alpha, 1 beta, 1 beta' and 1 omega subunit. When a sigma factor is associated with the core the holoenzyme is formed, which can initiate transcription.

The enzyme catalyses RNA(n) + a ribonucleoside 5'-triphosphate = RNA(n+1) + diphosphate. Its function is as follows. DNA-dependent RNA polymerase catalyzes the transcription of DNA into RNA using the four ribonucleoside triphosphates as substrates. This Xylella fastidiosa (strain M23) protein is DNA-directed RNA polymerase subunit alpha.